The following is a 151-amino-acid chain: Ribosome maturation factor RimP (151 aa).

This sequence belongs to the RimP family.

It localises to the cytoplasm. Functionally, required for maturation of 30S ribosomal subunits. The protein is Ribosome maturation factor RimP of Shewanella woodyi (strain ATCC 51908 / MS32).